Here is a 151-residue protein sequence, read N- to C-terminus: Ribosome maturation factor RimP (151 aa).

It belongs to the RimP family.

It is found in the cytoplasm. In terms of biological role, required for maturation of 30S ribosomal subunits. The sequence is that of Ribosome maturation factor RimP from Crocosphaera subtropica (strain ATCC 51142 / BH68) (Cyanothece sp. (strain ATCC 51142)).